The primary structure comprises 439 residues: Xaa-Pro dipeptidase (439 aa).

Positions 244, 255, 335, 380, and 419 each coordinate Mn(2+).

Belongs to the peptidase M24B family. Bacterial-type prolidase subfamily. Requires Mn(2+) as cofactor.

The catalysed reaction is Xaa-L-Pro dipeptide + H2O = an L-alpha-amino acid + L-proline. Splits dipeptides with a prolyl residue in the C-terminal position. The protein is Xaa-Pro dipeptidase of Shewanella sp. (strain ANA-3).